A 145-amino-acid polypeptide reads, in one-letter code: Protein BUD31 homolog 3 (145 aa).

Belongs to the BUD31 (G10) family.

Its subcellular location is the nucleus. This Oryza sativa subsp. japonica (Rice) protein is Protein BUD31 homolog 3.